The sequence spans 339 residues: uncharacterized protein (339 aa).

Residues Val-17–Glu-111 enclose the Rhodanese domain.

This is an uncharacterized protein from Schizosaccharomyces pombe (strain 972 / ATCC 24843) (Fission yeast).